The chain runs to 392 residues: Formate-dependent phosphoribosylglycinamide formyltransferase (392 aa).

N(1)-(5-phospho-beta-D-ribosyl)glycinamide contacts are provided by residues 15-16 and glutamate 75; that span reads EL. Residues arginine 107, lysine 148, 153-158, 188-191, and glutamate 196 contribute to the ATP site; these read SSGKGQ and EEFL. The ATP-grasp domain maps to 112-302; that stretch reads DLASEELALL…EFELHLRAVL (191 aa). Residues glutamate 261 and glutamate 273 each contribute to the Mg(2+) site. N(1)-(5-phospho-beta-D-ribosyl)glycinamide contacts are provided by residues aspartate 280, lysine 350, and 357 to 358; that span reads RR.

It belongs to the PurK/PurT family. As to quaternary structure, homodimer.

The enzyme catalyses N(1)-(5-phospho-beta-D-ribosyl)glycinamide + formate + ATP = N(2)-formyl-N(1)-(5-phospho-beta-D-ribosyl)glycinamide + ADP + phosphate + H(+). Its pathway is purine metabolism; IMP biosynthesis via de novo pathway; N(2)-formyl-N(1)-(5-phospho-D-ribosyl)glycinamide from N(1)-(5-phospho-D-ribosyl)glycinamide (formate route): step 1/1. In terms of biological role, involved in the de novo purine biosynthesis. Catalyzes the transfer of formate to 5-phospho-ribosyl-glycinamide (GAR), producing 5-phospho-ribosyl-N-formylglycinamide (FGAR). Formate is provided by PurU via hydrolysis of 10-formyl-tetrahydrofolate. This Prochlorococcus marinus (strain MIT 9303) protein is Formate-dependent phosphoribosylglycinamide formyltransferase.